Reading from the N-terminus, the 228-residue chain is Ras-related protein Rab-33B (228 aa).

The GTP site is built by N41, V42, G43, K44, T45, C46, T60, and T63. T45 lines the Mg(2+) pocket. The Switch 1 motif lies at 54-66 (GRFPQRTEATIGV). Mg(2+)-binding residues include T63 and D86. Positions 87 to 106 (TAGQERFRKSMVQHYYRNVH) match the Switch 2 motif. Positions 89, 146, 147, 149, 177, and 178 each coordinate GTP. 2 S-geranylgeranyl cysteine lipidation sites follow: C226 and C228. C228 is modified (cysteine methyl ester).

It belongs to the small GTPase superfamily. Rab family. Interacts (GTP- and GDP-bound forms) with ATG16L1; the complex consists of a tetramer where two RAB33B molecules bind independently one molecule of the ATG16L1 homodimer; the interaction promotes ATG12-ATG5-ATG16L1 complex recruitment to phagophores. Interacts with ATG16L2; however interaction is approximately hundred times lower than for ATG16L1. Interacts with RIC1 (via C-terminus domain); the interaction is direct with a preference for RAB33B-GTP. Interacts with RGP1. It depends on Mg(2+) as a cofactor.

It is found in the golgi apparatus membrane. It localises to the golgi apparatus. The protein resides in the cis-Golgi network. Its subcellular location is the preautophagosomal structure membrane. It catalyses the reaction GTP + H2O = GDP + phosphate + H(+). With respect to regulation, regulated by guanine nucleotide exchange factors (GEFs) which promote the exchange of bound GDP for free GTP. Regulated by GTPase activating proteins (GAPs) such as SGSM2 which increase the GTP hydrolysis activity. Inhibited by GDP dissociation inhibitors (GDIs). In terms of biological role, the small GTPases Rab are key regulators of intracellular membrane trafficking, from the formation of transport vesicles to their fusion with membranes. Rabs cycle between an inactive GDP-bound form and an active GTP-bound form that is able to recruit to membranes different sets of downstream effectors directly responsible for vesicle formation, movement, tethering and fusion. RAB33B acts, in coordination with RAB6A, to regulate intra-Golgi retrograde trafficking. Participates in autophagosome formation by recruiting the ATG12-ATG5-ATG16L1 complex to phagophores, probably in a nucleotide-independent manner. The chain is Ras-related protein Rab-33B (RAB33B) from Gallus gallus (Chicken).